The following is a 165-amino-acid chain: Protein NKG7 (165 aa).

A run of 4 helical transmembrane segments spans residues 9–29 (LFAGSLGLTSSLIALTTDFWI), 61–81 (FCILAVLWGLVSVSFLILSCI), 92–112 (LVSTVMAFSAALSILVAMAVY), and 133–153 (FYLGWVSFILFLFAGCLSLGA).

It belongs to the PMP-22/EMP/MP20 family. Predominantly expressed by leukocytes with cytotoxic activity such as CD8(+) T-cells and natural killer cells.

It localises to the cell membrane. The protein resides in the cytolytic granule membrane. Regulates cytotoxic granule exocytosis in effector lymphocytes, thus acting as a critical mediator of inflammation in a broad range of infectious and non-infectious diseases. Essential for cytotoxic degranulation of natural killer (NK) cells and CD8(+) T-cells and for the activation of CD4(+) T-cells following infection. Plays a critical role in CD8(+) T-cell and NK cell-mediated cytolysis of target cells and contributes to the cytolytic activity via the perforin/granzyme pathway by enhancing exocytosis of LAMP1-carrying lytic granules. Contributes to NK cell-mediated control of cancer metastasis. This Mus musculus (Mouse) protein is Protein NKG7 (Nkg7).